Reading from the N-terminus, the 589-residue chain is ABC transporter G family member 8 (589 aa).

The ABC transporter domain maps to 16-261 (LTTSSISYTI…LLFKGFTVPP (246 aa)). 62 to 69 (GPSGAGKS) serves as a coordination point for ATP. The region spanning 311 to 521 (TEISLLARRF…ALDALLINEY (211 aa)) is the ABC transmembrane type-2 domain. 7 helical membrane passes run 335–355 (ALEA…IGIG), 365–385 (MFAF…PIFI), 412–432 (VFLP…YFLI), 441–461 (FGYF…FVLF), 470–490 (ITGT…SGYF), 499–519 (YWLF…LLIN), and 560–580 (FNVY…FLAL).

This sequence belongs to the ABC transporter superfamily. ABCG family. Eye pigment precursor importer (TC 3.A.1.204) subfamily.

The protein localises to the membrane. This Arabidopsis thaliana (Mouse-ear cress) protein is ABC transporter G family member 8 (ABCG8).